The following is a 242-amino-acid chain: Carboxy-S-adenosyl-L-methionine synthase (242 aa).

S-adenosyl-L-methionine-binding positions include Tyr-39, 64–66, 89–90, 117–118, Asn-132, and Arg-199; these read GCS, DN, and DI.

The protein belongs to the class I-like SAM-binding methyltransferase superfamily. Cx-SAM synthase family. In terms of assembly, homodimer.

It carries out the reaction prephenate + S-adenosyl-L-methionine = carboxy-S-adenosyl-L-methionine + 3-phenylpyruvate + H2O. Its function is as follows. Catalyzes the conversion of S-adenosyl-L-methionine (SAM) to carboxy-S-adenosyl-L-methionine (Cx-SAM). The sequence is that of Carboxy-S-adenosyl-L-methionine synthase from Vibrio atlanticus (strain LGP32) (Vibrio splendidus (strain Mel32)).